The sequence spans 500 residues: Na(+)/H(+) antiporter NhaB (500 aa).

11 helical membrane-spanning segments follow: residues 13–33, 34–54, 62–82, 97–117, 129–149, 242–262, 306–326, 350–370, 392–412, 449–469, and 477–497; these read FLGA…IINP, IAVV…EFIF, CYPL…GLTS, ILLL…LLFI, IVIS…LDAL, FLYV…TVVI, GIVA…VGLV, FEEA…VSVI, PIMF…VFVA, VATP…IAPL, and MVWM…LCVT.

This sequence belongs to the NhaB Na(+)/H(+) (TC 2.A.34) antiporter family.

It localises to the cell inner membrane. The enzyme catalyses 2 Na(+)(in) + 3 H(+)(out) = 2 Na(+)(out) + 3 H(+)(in). Its function is as follows. Na(+)/H(+) antiporter that extrudes sodium in exchange for external protons. The chain is Na(+)/H(+) antiporter NhaB from Marinomonas sp. (strain MWYL1).